The chain runs to 274 residues: Protein FRG1 homolog (274 aa).

The short motif at 20 to 36 (KKNLFKVGKEKKKKNKD) is the Nuclear localization signal element. Residues 27-46 (GKEKKKKNKDDKEKIDPDTV) are disordered. Residues 34–43 (NKDDKEKIDP) show a composition bias toward basic and acidic residues. The Bipartite nuclear localization signal motif lies at 252 to 268 (QADGSAHELLLDRRMKM).

Belongs to the FRG1 family.

The protein resides in the nucleus. It is found in the cajal body. The protein localises to the nucleolus. Its subcellular location is the cytoplasm. In terms of biological role, binds to mRNA in a sequence-independent manner. May play a role in regulation of pre-mRNA splicing or in the assembly of rRNA into ribosomal subunits. May be involved in mRNA transport. May be involved in epigenetic regulation of muscle differentiation through regulation of activity of the histone-lysine N-methyltransferase KMT5B. In Caenorhabditis elegans, this protein is Protein FRG1 homolog (frg-1).